Here is a 156-residue protein sequence, read N- to C-terminus: Small ribosomal subunit protein uS7 (156 aa).

This sequence belongs to the universal ribosomal protein uS7 family. Part of the 30S ribosomal subunit. Contacts proteins S9 and S11.

Functionally, one of the primary rRNA binding proteins, it binds directly to 16S rRNA where it nucleates assembly of the head domain of the 30S subunit. Is located at the subunit interface close to the decoding center, probably blocks exit of the E-site tRNA. In Magnetococcus marinus (strain ATCC BAA-1437 / JCM 17883 / MC-1), this protein is Small ribosomal subunit protein uS7.